Consider the following 525-residue polypeptide: ALBINO3-like protein 2, chloroplastic (525 aa).

4 helical membrane passes run 99-119 (WMIIASSTVAVRLALLPLLIL), 167-187 (LWFFPYLSVQLPCFFLLMASI), 217-237 (FGPVFPILIATFHYINIQISF), and 262-282 (ILSVPLFFVGYAIPQGSLVYW). TPR repeat units follow at residues 346–379 (PEELLSLSVQVLSKGDKETSIQLLRLALEKDPGY), 380–413 (VRGLVLMGQALLQKTQLSEATEYLELAISKLLDE), 425–458 (MLASQWAGAAYVQQGKLKSGIIHLERVAKLREPG), and 467–500 (FEALLLLSSALYKEGQSDEAAKILRVVVDHNPAY).

This sequence belongs to the OXA1/ALB3/YidC (TC 2.A.9.2) family.

The protein localises to the plastid. It is found in the chloroplast thylakoid membrane. Its function is as follows. Probably required for the insertion of integral membrane proteins into the chloroplast thylakoid membranes. The polypeptide is ALBINO3-like protein 2, chloroplastic (ALB3L2) (Arabidopsis thaliana (Mouse-ear cress)).